A 177-amino-acid polypeptide reads, in one-letter code: MFKELYKDSIVKSLKDKFNYGNIMQVPKLVKVCINMGVGDAATDSKAINEPLDSLYLIAGQKPLSTFAKKSISGFKIRKGATVGCKVTLRRDKMYEFLERLIYIALPREKDFRGFSVKQFDGNGNFSFGIKEHISFLEIDYDKISKIRGMDINIITSAVSDKEAKELLLALKFPFFD.

It belongs to the universal ribosomal protein uL5 family. Part of the 50S ribosomal subunit; part of the 5S rRNA/L5/L18/L25 subcomplex. Contacts the 5S rRNA and the P site tRNA. Forms a bridge to the 30S subunit in the 70S ribosome.

Functionally, this is one of the proteins that bind and probably mediate the attachment of the 5S RNA into the large ribosomal subunit, where it forms part of the central protuberance. In the 70S ribosome it contacts protein S13 of the 30S subunit (bridge B1b), connecting the 2 subunits; this bridge is implicated in subunit movement. Contacts the P site tRNA; the 5S rRNA and some of its associated proteins might help stabilize positioning of ribosome-bound tRNAs. The protein is Large ribosomal subunit protein uL5 of Wolbachia pipientis wMel.